The following is a 66-amino-acid chain: Conotoxin Lt5.6 (66 aa).

The first 19 residues, 1–19, serve as a signal peptide directing secretion; it reads MLCLPVFIILLLLASPAAP. Positions 20–54 are excised as a propeptide; the sequence is KSLETRIQNDLIRAGLTDADLKTEKGFLSGLLNVA.

This sequence belongs to the conotoxin T superfamily. Post-translationally, contains 2 disulfide bonds that can be either 'C1-C3, C2-C4' or 'C1-C4, C2-C3', since these disulfide connectivities have been observed for conotoxins with cysteine framework V (for examples, see AC P0DQQ7 and AC P81755). Expressed by the venom duct.

Its subcellular location is the secreted. This chain is Conotoxin Lt5.6, found in Conus litteratus (Lettered cone).